A 489-amino-acid polypeptide reads, in one-letter code: 3-octaprenyl-4-hydroxybenzoate carboxy-lyase (489 aa).

Position 172 (N172) interacts with Mn(2+). Prenylated FMN contacts are provided by residues 175-177, 189-191, and 194-195; these read IYR, RWL, and RG. E238 contacts Mn(2+). D287 (proton donor) is an active-site residue.

Belongs to the UbiD family. In terms of assembly, homohexamer. It depends on prenylated FMN as a cofactor. The cofactor is Mn(2+).

The protein resides in the cell membrane. The catalysed reaction is a 4-hydroxy-3-(all-trans-polyprenyl)benzoate + H(+) = a 2-(all-trans-polyprenyl)phenol + CO2. Its pathway is cofactor biosynthesis; ubiquinone biosynthesis. Functionally, catalyzes the decarboxylation of 3-octaprenyl-4-hydroxy benzoate to 2-octaprenylphenol, an intermediate step in ubiquinone biosynthesis. This is 3-octaprenyl-4-hydroxybenzoate carboxy-lyase from Glaesserella parasuis serovar 5 (strain SH0165) (Haemophilus parasuis).